We begin with the raw amino-acid sequence, 124 residues long: Small ribosomal subunit protein uS12c (124 aa).

Residues 1–28 (MPTFQQLVRSARKPHAKKTKSPALQGCP) are disordered. Positions 10-20 (SARKPHAKKTK) are enriched in basic residues.

The protein belongs to the universal ribosomal protein uS12 family. As to quaternary structure, part of the 30S ribosomal subunit.

The protein localises to the plastid. In terms of biological role, with S4 and S5 plays an important role in translational accuracy. Located at the interface of the 30S and 50S subunits. In Prototheca wickerhamii, this protein is Small ribosomal subunit protein uS12c (rps12).